The primary structure comprises 1125 residues: MSSSRPSHSSSNSARSRHSARIIAQTTVDAKLHADFEESGSSFDYSSSVRVTDSVGGDQPPRSDKVTTAYLHHIQKGKLIQPFGCLLALDEKTFRVVAYSENAPELLTMVSHAVPSVGEHPVLGIGTDIRTIFTAPSASALQKAMGFGDVSLLNPILVHCKTSGKPFYAIVHRVTGSLIIDFEPVKPYEVPMTAAGALQSYKLAAKAITRLQSLPSGSMERLCDTMVQEVFELTGYDRAMAYKFHDDDHGEVVSEVTKPGMEPYLGLHYPATDIPQASRFLFMKNKVRMIVDCHAKHVKVLQDEKLPFDLTLCGSTLRAPHSCHLQYMENMNSIASLVMAVVVNDGDEDGDTPDSANPQKRKRLWGLVVCHNTSPRFVPFPLRYACEFLAQVFAIHVNKELELENQIVEKNILRTQTLLCDMLMRDAPLGIVTQSPNIMDLVKCDGAVLFYRNKIWRLGITPSDLQLQDIAFWLSEYHMDSTGLSTDSLYDAGYPGALALGDVVCGMAAVRITSKDMLFWFRSQTAAEIRWGGAKHEPGEKDDGRRMHPRSSFKAFLEVVKTRSLPWKDYEMDAIHSLQLILRNTFKDIETMDVDTKTIHARLSDLKIEGMQELEAVTSEMVRLIETATVPILAVDVDGLVNGWNTKISELTGLLVDKAIGKHLLTLVEDSSVDIVKRMLFLALQGKEEQNIQFEIKTHGSKSECGPICLVVNACASRDLHENVVGVCFVGQDITGQKMVMDKFTRIEGDYKAIVQNRNPLIPPIFGTDEFGWCSEWNPAMTNLTGWKREEVLDKMLLGEVFGLNMACCRLKNQEAFVNLGVVLNTAMTGQESEKVSFGFFARTGKYVECLLCVSKKLDREGAVTGVFCFLQLASQELQQALHVQRLSEQTALKRLKALAYLKKQIWNPLSGIIFSGKMMEGTELGAEQKELLHTSAQCQCQLSKILDDSDLDSIIEGYLDLEMVEFTLREYYGCYQSSHDEKHEKGIPIINDALKMAETLYGDSIRLQQVLADFCRCQLILTPSGGLLTVSASFFQRPVGAILFILVHSGKLRIRHLGAGIPEALVDQMYGEDTGASVEGISLVISRKLVKLMNGDVRYMREAGKSSFIISVELAGGHKSQKRA.

2 stretches are compositionally biased toward low complexity: residues 1–14 and 39–48; these read MSSS…SNSA and SGSSFDYSSS. 2 disordered regions span residues 1-22 and 38-64; these read MSSS…SARI and ESGS…PRSD. Residues 218–401 form the GAF domain; that stretch reads SMERLCDTMV…VFAIHVNKEL (184 aa). Cys-323 contacts phytochromobilin. PAS domains are found at residues 617–687 and 750–821; these read VTSE…LQGK and DYKA…VNLG. The Histidine kinase domain maps to 901-1117; sequence YLKKQIWNPL…SFIISVELAG (217 aa).

The protein belongs to the phytochrome family. Homodimer. Post-translationally, contains one covalently linked phytochromobilin chromophore.

Regulatory photoreceptor which exists in two forms that are reversibly interconvertible by light: the Pr form that absorbs maximally in the red region of the spectrum and the Pfr form that absorbs maximally in the far-red region. Photoconversion of Pr to Pfr induces an array of morphogenic responses, whereas reconversion of Pfr to Pr cancels the induction of those responses. Pfr controls the expression of a number of nuclear genes including those encoding the small subunit of ribulose-bisphosphate carboxylase, chlorophyll A/B binding protein, protochlorophyllide reductase, rRNA, etc. It also controls the expression of its own gene(s) in a negative feedback fashion. The sequence is that of Phytochrome A (PHYA) from Populus tremuloides (Quaking aspen).